We begin with the raw amino-acid sequence, 319 residues long: NADH-quinone oxidoreductase subunit H 1 (319 aa).

Transmembrane regions (helical) follow at residues 5 to 25 (ILTA…AGVF), 78 to 98 (LAPA…AFGE), 109 to 129 (VMFL…GALA), 147 to 167 (LAYE…AGSL), 179 to 199 (VWFI…GIAA), 214 to 234 (LVGG…FLGE), 238 to 258 (ILLV…GPWL), 262 to 282 (IWFG…RAAL), and 294 to 314 (AWKV…FIVV).

This sequence belongs to the complex I subunit 1 family. NDH-1 is composed of 14 different subunits. Subunits NuoA, H, J, K, L, M, N constitute the membrane sector of the complex.

The protein localises to the cell inner membrane. It catalyses the reaction a quinone + NADH + 5 H(+)(in) = a quinol + NAD(+) + 4 H(+)(out). Its function is as follows. NDH-1 shuttles electrons from NADH, via FMN and iron-sulfur (Fe-S) centers, to quinones in the respiratory chain. The immediate electron acceptor for the enzyme in this species is believed to be ubiquinone. Couples the redox reaction to proton translocation (for every two electrons transferred, four hydrogen ions are translocated across the cytoplasmic membrane), and thus conserves the redox energy in a proton gradient. This subunit may bind ubiquinone. The chain is NADH-quinone oxidoreductase subunit H 1 from Rhodopseudomonas palustris (strain BisA53).